The sequence spans 23 residues: Magainin-R1 (23 aa).

In terms of tissue distribution, expressed by the skin glands.

It localises to the secreted. Antimicrobial peptide. This chain is Magainin-R1, found in Xenopus ruwenzoriensis (Uganda clawed frog).